Reading from the N-terminus, the 515-residue chain is 2,3-bisphosphoglycerate-independent phosphoglycerate mutase (515 aa).

Asp-14 and Ser-64 together coordinate Mn(2+). Ser-64 serves as the catalytic Phosphoserine intermediate. Residues His-125, 155–156 (RD), Arg-187, Arg-193, 263–266 (RADR), and Lys-337 each bind substrate. 5 residues coordinate Mn(2+): Asp-404, His-408, Asp-445, His-446, and His-464.

Belongs to the BPG-independent phosphoglycerate mutase family. Monomer. The cofactor is Mn(2+).

It catalyses the reaction (2R)-2-phosphoglycerate = (2R)-3-phosphoglycerate. It functions in the pathway carbohydrate degradation; glycolysis; pyruvate from D-glyceraldehyde 3-phosphate: step 3/5. Catalyzes the interconversion of 2-phosphoglycerate and 3-phosphoglycerate. The sequence is that of 2,3-bisphosphoglycerate-independent phosphoglycerate mutase from Pseudomonas aeruginosa (strain ATCC 15692 / DSM 22644 / CIP 104116 / JCM 14847 / LMG 12228 / 1C / PRS 101 / PAO1).